The primary structure comprises 202 residues: uncharacterized protein (202 aa).

A helical transmembrane segment spans residues 18–38 (FLIFLIFLSVLGCGITISGCI).

Its subcellular location is the membrane. This is an uncharacterized protein from Methanocaldococcus jannaschii (strain ATCC 43067 / DSM 2661 / JAL-1 / JCM 10045 / NBRC 100440) (Methanococcus jannaschii).